The primary structure comprises 575 residues: Dihydroxy-acid dehydratase (575 aa).

Residues 1–27 (MSNQERQERPEKDPDLRSTEVTEGYEK) form a disordered region. Cysteine 61 serves as a coordination point for [2Fe-2S] cluster. Aspartate 93 is a binding site for Mg(2+). Cysteine 134 is a binding site for [2Fe-2S] cluster. 2 residues coordinate Mg(2+): aspartate 135 and lysine 136. Lysine 136 carries the post-translational modification N6-carboxylysine. Cysteine 206 serves as a coordination point for [2Fe-2S] cluster. Glutamate 460 lines the Mg(2+) pocket. Serine 486 (proton acceptor) is an active-site residue.

It belongs to the IlvD/Edd family. As to quaternary structure, homodimer. It depends on [2Fe-2S] cluster as a cofactor. Requires Mg(2+) as cofactor.

It catalyses the reaction (2R)-2,3-dihydroxy-3-methylbutanoate = 3-methyl-2-oxobutanoate + H2O. The enzyme catalyses (2R,3R)-2,3-dihydroxy-3-methylpentanoate = (S)-3-methyl-2-oxopentanoate + H2O. It functions in the pathway amino-acid biosynthesis; L-isoleucine biosynthesis; L-isoleucine from 2-oxobutanoate: step 3/4. Its pathway is amino-acid biosynthesis; L-valine biosynthesis; L-valine from pyruvate: step 3/4. Functions in the biosynthesis of branched-chain amino acids. Catalyzes the dehydration of (2R,3R)-2,3-dihydroxy-3-methylpentanoate (2,3-dihydroxy-3-methylvalerate) into 2-oxo-3-methylpentanoate (2-oxo-3-methylvalerate) and of (2R)-2,3-dihydroxy-3-methylbutanoate (2,3-dihydroxyisovalerate) into 2-oxo-3-methylbutanoate (2-oxoisovalerate), the penultimate precursor to L-isoleucine and L-valine, respectively. In Haloarcula marismortui (strain ATCC 43049 / DSM 3752 / JCM 8966 / VKM B-1809) (Halobacterium marismortui), this protein is Dihydroxy-acid dehydratase.